Here is a 236-residue protein sequence, read N- to C-terminus: Uridylate kinase (236 aa).

10–13 (KLSG) provides a ligand contact to ATP. UMP is bound at residue Gly-52. Gly-53 and Arg-57 together coordinate ATP. UMP-binding positions include Asp-72 and 133–140 (TGNPFFTT). Positions 160, 166, and 169 each coordinate ATP.

The protein belongs to the UMP kinase family. As to quaternary structure, homohexamer.

It localises to the cytoplasm. The catalysed reaction is UMP + ATP = UDP + ADP. It participates in pyrimidine metabolism; CTP biosynthesis via de novo pathway; UDP from UMP (UMPK route): step 1/1. With respect to regulation, inhibited by UTP. In terms of biological role, catalyzes the reversible phosphorylation of UMP to UDP. This is Uridylate kinase from Phocaeicola vulgatus (strain ATCC 8482 / DSM 1447 / JCM 5826 / CCUG 4940 / NBRC 14291 / NCTC 11154) (Bacteroides vulgatus).